The chain runs to 513 residues: Cytochrome P450 monooxygenase ARMGADRAFT_1018418 (513 aa).

Residues 1 to 21 form a helical membrane-spanning segment; it reads MTHASSAWFLAAVVIVTFIVV. Cysteine 435 is a heme binding site. N-linked (GlcNAc...) asparagine glycosylation occurs at asparagine 442.

The protein belongs to the cytochrome P450 family. Requires heme as cofactor.

The protein resides in the membrane. The protein operates within secondary metabolite biosynthesis. Its function is as follows. Cytochrome P450 monooxygenase, part of the gene cluster that mediates the biosynthesis of melleolides, a range of antifungal and phytotoxic polyketide derivatives composed of an orsellinic acid (OA) moiety esterified to various sesquiterpene alcohols. The first step in melleolides biosynthesis is performed by the delta(6)-protoilludene synthase PRO1 which catalyzes the cyclization of farnesyl diphosphate to protoilludene. The orsellinic acid synthase armB produces OA by condensing acetyl-CoA with 3 malonyl-CoA units in a three-round chain elongation reaction folowed by a C2-C7 ring closure. ArmB further catalyzes the trans-esterification of OA to the various sesquiterpene alcohols resulting from the hydroxylation of protoilludene. The melleolides cluster also includes 5 cytochrome P450 monooxygenases, 4 NAD(+)-dependent oxidoreductases, one flavin-dependent oxidoreductase, and one O-methyltransferase. The cytochrome P450 monooxygenases may be involved in protoilludene hydroxylation to elaborate melleolides with multiple alcohol groups, such as melleolide D, which carries alcohol functionalities at C-4, C-5, C-10, and C-13. The role of the NAD(+)-dependent enzymes remains unknown. Numerous melleolides, including arnamial, show 5'-O-methylation of the aromatic moiety which may be catalyzed by the methyltransferase encoded in the cluster. The flavin-dependent oxidoreductase might represent the dehydrogenase yielding the aldehyde in position 1 of arnamial and other melleolides. Finally, several halogenase localized outside of the cluster, are able to catalyze the transfer of a single chlorine atom to the melleolide backbone, resulting in a 6'-chloromelleolide product. The sequence is that of Cytochrome P450 monooxygenase ARMGADRAFT_1018418 from Armillaria gallica (Bulbous honey fungus).